The following is an 86-amino-acid chain: Small ribosomal subunit protein bS16 (86 aa).

It belongs to the bacterial ribosomal protein bS16 family.

The chain is Small ribosomal subunit protein bS16 from Stenotrophomonas maltophilia (strain R551-3).